A 458-amino-acid chain; its full sequence is Phosphoglucosamine mutase (458 aa).

Serine 109 (phosphoserine intermediate) is an active-site residue. Serine 109, aspartate 251, aspartate 253, and aspartate 255 together coordinate Mg(2+). A Phosphoserine modification is found at serine 109.

It belongs to the phosphohexose mutase family. Mg(2+) serves as cofactor. Activated by phosphorylation.

It carries out the reaction alpha-D-glucosamine 1-phosphate = D-glucosamine 6-phosphate. In terms of biological role, catalyzes the conversion of glucosamine-6-phosphate to glucosamine-1-phosphate. The protein is Phosphoglucosamine mutase of Myxococcus xanthus (strain DK1622).